Here is a 468-residue protein sequence, read N- to C-terminus: ATP synthase subunit beta (468 aa).

155-162 (GGAGVGKT) is an ATP binding site.

This sequence belongs to the ATPase alpha/beta chains family. In terms of assembly, F-type ATPases have 2 components, CF(1) - the catalytic core - and CF(0) - the membrane proton channel. CF(1) has five subunits: alpha(3), beta(3), gamma(1), delta(1), epsilon(1). CF(0) has three main subunits: a(1), b(2) and c(9-12). The alpha and beta chains form an alternating ring which encloses part of the gamma chain. CF(1) is attached to CF(0) by a central stalk formed by the gamma and epsilon chains, while a peripheral stalk is formed by the delta and b chains.

The protein localises to the cell membrane. The catalysed reaction is ATP + H2O + 4 H(+)(in) = ADP + phosphate + 5 H(+)(out). Produces ATP from ADP in the presence of a proton gradient across the membrane. The catalytic sites are hosted primarily by the beta subunits. The chain is ATP synthase subunit beta from Streptococcus mutans serotype c (strain ATCC 700610 / UA159).